The chain runs to 880 residues: Beta-N-acetylglucosaminidase (880 aa).

The first 27 residues, 1-27, serve as a signal peptide directing secretion; it reads MKKRLIAPMLLSAASLAFFAMSGSAQA. 3 SPOR domains span residues 70–149, 150–229, and 230–311; these read SGTT…VKAY, GAAQ…LKET, and VKGQ…YQQV. 2 repeat units span residues 439–473 and 479–513. The SH3b domain occupies 630 to 700; it reads TATSTVTADV…VDPNNFSRDS (71 aa).

This sequence belongs to the glycosyl hydrolase 73 family. In terms of assembly, homodimer.

The protein localises to the secreted. It localises to the cell wall. It catalyses the reaction an N(4)-(oligosaccharide-(1-&gt;3)-[oligosaccharide-(1-&gt;6)]-beta-D-Man-(1-&gt;4)-beta-D-GlcNAc-(1-&gt;4)-alpha-D-GlcNAc)-L-asparaginyl-[protein] + H2O = an oligosaccharide-(1-&gt;3)-[oligosaccharide-(1-&gt;6)]-beta-D-Man-(1-&gt;4)-D-GlcNAc + N(4)-(N-acetyl-beta-D-glucosaminyl)-L-asparaginyl-[protein]. Its activity is regulated as follows. Inhibited by diethyl pyrocarbonate, slightly by EDTA. Not inhibited by PMSF, diisopropyl fluorophosphate, 2-mercaptoethanol or N-ethylmaleimide. In terms of biological role, cell wall hydrolase not involved in cell autolysis, competence, sporulation or germination. It hydrolyzes the beta-1,4 glycan bond between the N-acetylglucosaminyl and the N-acetylmuramoyl residues in the glycan chain. The polypeptide is Beta-N-acetylglucosaminidase (lytD) (Bacillus subtilis (strain 168)).